The chain runs to 430 residues: Long-chain specific acyl-CoA dehydrogenase, mitochondrial (430 aa).

Residues 1–30 (MAARLLLRSLRVLKARSAPRPPPSARCSHS) constitute a mitochondrion transit peptide. The tract at residues 17-39 (SAPRPPPSARCSHSGAEARLETP) is disordered. Lys42 carries the N6-acetyllysine modification. 2 positions are modified to phosphoserine: Ser54 and Ser55. N6-acetyllysine; alternate is present on residues Lys66 and Lys81. Residues Lys66 and Lys81 each carry the N6-succinyllysine; alternate modification. Lys92 and Lys95 each carry N6-acetyllysine. Lys165 carries the post-translational modification N6-succinyllysine. 170-179 (IAMTEPGAGS) provides a ligand contact to FAD. Ser179 is a binding site for substrate. A Phosphoserine modification is found at Ser191. FAD is bound at residue 203 to 205 (FIT). Residue 227-228 (AH) coordinates substrate. Lys240 is subject to N6-succinyllysine. Residues Lys254 and Lys279 each carry the N6-acetyllysine; alternate modification. Residues Lys254 and Lys279 each carry the N6-succinyllysine; alternate modification. Substrate-binding positions include Tyr282 and 289-292 (PQER). Glu291 serves as the catalytic Proton acceptor. Arg317 serves as a coordination point for FAD. Lys318 carries the N6-acetyllysine modification. Residue Lys322 is modified to N6-acetyllysine; alternate. Lys322 is modified (N6-succinyllysine; alternate). Position 328 (Gln328) interacts with FAD. N6-acetyllysine is present on Lys358. Ser362 bears the Phosphoserine mark. FAD is bound at residue 385 to 389 (QLHGG). Substrate is bound at residue 412–413 (GG). Position 414–416 (414–416 (TNE)) interacts with FAD.

Belongs to the acyl-CoA dehydrogenase family. In terms of assembly, homotetramer. FAD is required as a cofactor. Acetylation at Lys-318 and Lys-322 in proximity of the cofactor-binding sites strongly reduces catalytic activity. These sites are deacetylated by SIRT3. As to expression, expressed in heart, skeletal muscle, kidney, and brain. Expressed in liver (at protein level).

It is found in the mitochondrion matrix. The catalysed reaction is a long-chain 2,3-saturated fatty acyl-CoA + oxidized [electron-transfer flavoprotein] + H(+) = a long-chain (2E)-enoyl-CoA + reduced [electron-transfer flavoprotein]. It carries out the reaction oxidized [electron-transfer flavoprotein] + hexadecanoyl-CoA + H(+) = (2E)-hexadecenoyl-CoA + reduced [electron-transfer flavoprotein]. The enzyme catalyses hexanoyl-CoA + oxidized [electron-transfer flavoprotein] + H(+) = (2E)-hexenoyl-CoA + reduced [electron-transfer flavoprotein]. It catalyses the reaction octanoyl-CoA + oxidized [electron-transfer flavoprotein] + H(+) = (2E)-octenoyl-CoA + reduced [electron-transfer flavoprotein]. The catalysed reaction is decanoyl-CoA + oxidized [electron-transfer flavoprotein] + H(+) = (2E)-decenoyl-CoA + reduced [electron-transfer flavoprotein]. It carries out the reaction dodecanoyl-CoA + oxidized [electron-transfer flavoprotein] + H(+) = (2E)-dodecenoyl-CoA + reduced [electron-transfer flavoprotein]. The enzyme catalyses tetradecanoyl-CoA + oxidized [electron-transfer flavoprotein] + H(+) = (2E)-tetradecenoyl-CoA + reduced [electron-transfer flavoprotein]. It catalyses the reaction octadecanoyl-CoA + oxidized [electron-transfer flavoprotein] + H(+) = (2E)-octadecenoyl-CoA + reduced [electron-transfer flavoprotein]. The catalysed reaction is eicosanoyl-CoA + oxidized [electron-transfer flavoprotein] + H(+) = (2E)-eicosenoyl-CoA + reduced [electron-transfer flavoprotein]. It carries out the reaction docosanoyl-CoA + oxidized [electron-transfer flavoprotein] + H(+) = (2E)-docosenoyl-CoA + reduced [electron-transfer flavoprotein]. The enzyme catalyses tetracosanoyl-CoA + oxidized [electron-transfer flavoprotein] + H(+) = (2E)-tetracosenoyl-CoA + reduced [electron-transfer flavoprotein]. It catalyses the reaction (5E)-tetradecenoyl-CoA + oxidized [electron-transfer flavoprotein] + H(+) = (2E,5E)-tetradecadienoyl-CoA + reduced [electron-transfer flavoprotein]. The catalysed reaction is (5Z)-tetradecenoyl-CoA + oxidized [electron-transfer flavoprotein] + H(+) = (2E,5Z)-tetradecadienoyl-CoA + reduced [electron-transfer flavoprotein]. It carries out the reaction oxidized [electron-transfer flavoprotein] + (9Z)-octadecenoyl-CoA + H(+) = (2E,9Z)-octadecadienoyl-CoA + reduced [electron-transfer flavoprotein]. The protein operates within lipid metabolism; mitochondrial fatty acid beta-oxidation. Long-chain specific acyl-CoA dehydrogenase is one of the acyl-CoA dehydrogenases that catalyze the first step of mitochondrial fatty acid beta-oxidation, an aerobic process breaking down fatty acids into acetyl-CoA and allowing the production of energy from fats. The first step of fatty acid beta-oxidation consists in the removal of one hydrogen from C-2 and C-3 of the straight-chain fatty acyl-CoA thioester, resulting in the formation of trans-2-enoyl-CoA. Among the different mitochondrial acyl-CoA dehydrogenases, long-chain specific acyl-CoA dehydrogenase can act on saturated and unsaturated acyl-CoAs with 6 to 24 carbons with a preference for 8 to 18 carbons long primary chains. This chain is Long-chain specific acyl-CoA dehydrogenase, mitochondrial, found in Mus musculus (Mouse).